We begin with the raw amino-acid sequence, 579 residues long: Fatty-acid amide hydrolase 1 (579 aa).

A helical transmembrane segment spans residues 9–29 (ALSGLSGVCLACSLLSAAVVL). Residues 30-403 (RWTRSQTARG…GDFVDPCLGD (374 aa)) lie on the Cytoplasmic side of the membrane. The active-site Charge relay system is the K142. Residues M191, S217, and 238–241 (IGGS) contribute to the substrate site. Catalysis depends on S217, which acts as the Charge relay system. Residue S241 is the Acyl-ester intermediate of the active site. Phosphoserine is present on S241. An intramembrane segment occupies 404 to 433 (LVLVLKLPRWFKKLLSFLLKPLFPRLAAFL). Over 434–579 (NSMCPRSAEK…RLMTPEKRPS (146 aa)) the chain is Cytoplasmic.

The protein belongs to the amidase family. In terms of assembly, homodimer.

Its subcellular location is the endoplasmic reticulum membrane. It is found in the golgi apparatus membrane. It carries out the reaction N-(5Z,8Z,11Z,14Z-eicosatetraenoyl)-ethanolamine + H2O = ethanolamine + (5Z,8Z,11Z,14Z)-eicosatetraenoate. It catalyses the reaction (9Z)-octadecenamide + H2O = (9Z)-octadecenoate + NH4(+). The enzyme catalyses 2-(5Z,8Z,11Z,14Z-eicosatetraenoyl)-glycerol + H2O = glycerol + (5Z,8Z,11Z,14Z)-eicosatetraenoate + H(+). The catalysed reaction is N-(9Z-hexadecenoyl) ethanolamine + H2O = (9Z)-hexadecenoate + ethanolamine. It carries out the reaction N-(9Z-octadecenoyl) ethanolamine + H2O = ethanolamine + (9Z)-octadecenoate. It catalyses the reaction N-octadecanoyl ethanolamine + H2O = octadecanoate + ethanolamine. The enzyme catalyses N-docosanoyl-ethanolamine + H2O = docosanoate + ethanolamine. The catalysed reaction is N-tetracosanoyl-taurine + H2O = tetracosanoate + taurine. It carries out the reaction N-(15Z-tetracosenoyl)-ethanolamine + H2O = (15Z)-tetracosenoate + ethanolamine. It catalyses the reaction N-(9Z-octadecenoyl)-taurine + H2O = taurine + (9Z)-octadecenoate. The enzyme catalyses N-docosanoyl-taurine + H2O = docosanoate + taurine. The catalysed reaction is N-(15Z-tetracosenoyl)-taurine + H2O = (15Z)-tetracosenoate + taurine. It carries out the reaction N-tricosanoyl-taurine + H2O = tricosanoate + taurine. It catalyses the reaction (9Z,12Z,15Z)-octadecatrienamide + H2O = (9Z,12Z,15Z)-octadecatrienoate + NH4(+). The enzyme catalyses (5Z,8Z,11Z,14Z)-eicosatetraenamide + H2O = (5Z,8Z,11Z,14Z)-eicosatetraenoate + NH4(+). The catalysed reaction is (6Z)-octadecenamide + H2O = (6Z)-octadecenoate + NH4(+). It carries out the reaction (15Z)-tetracosenamide + H2O = (15Z)-tetracosenoate + NH4(+). It catalyses the reaction (8Z,11Z,14Z)-eicosatrienamide + H2O = (8Z,11Z,14Z)-eicosatrienoate + NH4(+). The enzyme catalyses (11Z,14Z,17Z)-eicosatrienamide + H2O = (11Z,14Z,17Z)-eicosatrienoate + NH4(+). The catalysed reaction is (11Z,14Z)-eicosadienamide + H2O = (11Z,14Z)-eicosadienoate + NH4(+). It carries out the reaction (9Z,12Z)-octadecadienamide + H2O = (9Z,12Z)-octadecadienoate + NH4(+). It catalyses the reaction tetradecamide + H2O = tetradecanoate + NH4(+). The enzyme catalyses 1-O-methyl-(5Z,8Z,11Z,14Z)-eicosatetraenoate + H2O = methanol + (5Z,8Z,11Z,14Z)-eicosatetraenoate + H(+). The catalysed reaction is (11Z)-eicosenamide + H2O = (11Z)-eicosenoate + NH4(+). It carries out the reaction (9Z)-octadecenoate + glycine = N-(9Z-octadecenoyl)glycine + H2O. It catalyses the reaction N-(5Z,8Z,11Z,14Z)-eicosatetraenoyl-glycine + H2O = (5Z,8Z,11Z,14Z)-eicosatetraenoate + glycine. The enzyme catalyses N-(5Z,8Z,11Z,14Z-eicosatetraenoyl)-L-serine + H2O = (5Z,8Z,11Z,14Z)-eicosatetraenoate + L-serine. Inhibited the trifluoromethyl compound PF-3845. Catalyzes the hydrolysis of endogenous amidated lipids like the endocannabinoid anandamide (N-(5Z,8Z,11Z,14Z-eicosatetraenoyl)-ethanolamine), as well as other fatty amides such as the taurine-conjugated fatty acids (a structural class of central nervous system (CNS) metabolites), to their corresponding fatty acids, thereby regulating the signaling functions of these molecules. FAAH cooperates with PM20D1 in the hydrolysis of amino acid-conjugated fatty acids such as N-fatty acyl glycine and N-fatty acyl-L-serine, thereby acting as a physiological regulator of specific subsets of intracellular, but not of extracellular, N-fatty acyl amino acids. It can also catalyze the hydrolysis of the endocannabinoid 2-arachidonoylglycerol (2-(5Z,8Z,11Z,14Z-eicosatetraenoyl)-glycerol). The chain is Fatty-acid amide hydrolase 1 (Faah) from Mus musculus (Mouse).